Consider the following 250-residue polypeptide: DNA repair protein RecO (250 aa).

This sequence belongs to the RecO family.

Involved in DNA repair and RecF pathway recombination. This is DNA repair protein RecO from Staphylococcus aureus (strain bovine RF122 / ET3-1).